A 283-amino-acid polypeptide reads, in one-letter code: Pantothenate synthetase (283 aa).

Residue 30-37 coordinates ATP; that stretch reads MGNLHDGH. Catalysis depends on H37, which acts as the Proton donor. Q61 serves as a coordination point for (R)-pantoate. Residue Q61 participates in beta-alanine binding. An ATP-binding site is contributed by 149 to 152; it reads GEKD. Q155 contacts (R)-pantoate. 186-189 contacts ATP; the sequence is LSSR.

This sequence belongs to the pantothenate synthetase family. Homodimer.

The protein resides in the cytoplasm. It carries out the reaction (R)-pantoate + beta-alanine + ATP = (R)-pantothenate + AMP + diphosphate + H(+). Its pathway is cofactor biosynthesis; (R)-pantothenate biosynthesis; (R)-pantothenate from (R)-pantoate and beta-alanine: step 1/1. Catalyzes the condensation of pantoate with beta-alanine in an ATP-dependent reaction via a pantoyl-adenylate intermediate. This is Pantothenate synthetase from Escherichia coli O6:K15:H31 (strain 536 / UPEC).